The primary structure comprises 339 residues: EEIG family member 2 (339 aa).

A C2 NT-type domain is found at M1–L111. S197 is modified (phosphoserine). The interval T226–P262 is disordered. A compositionally biased stretch (low complexity) spans T230–T248. Over residues A249–A259 the composition is skewed to basic and acidic residues. A phosphoserine mark is found at S255, S267, S299, S300, and S329.

It belongs to the EEIG family. Expressed in bone marrow-derived macrophages.

The polypeptide is EEIG family member 2 (Eeig2) (Mus musculus (Mouse)).